The sequence spans 137 residues: Peptide methionine sulfoxide reductase MsrB (137 aa).

A MsrB domain is found at 7 to 129; it reads PEELKNGLSE…NSASLSFTDE (123 aa). Residues C46, C49, C95, and C98 each contribute to the Zn(2+) site. The Nucleophile role is filled by C118.

It belongs to the MsrB Met sulfoxide reductase family. Zn(2+) serves as cofactor.

It carries out the reaction L-methionyl-[protein] + [thioredoxin]-disulfide + H2O = L-methionyl-(R)-S-oxide-[protein] + [thioredoxin]-dithiol. The polypeptide is Peptide methionine sulfoxide reductase MsrB (Klebsiella pneumoniae subsp. pneumoniae (strain ATCC 700721 / MGH 78578)).